The chain runs to 104 residues: MAGKAHRLSAEERDQLLPNLRAVGWNELEGRDAIFKQFHFKDFNRAFGFMTRVALQAEKLDHHPEWFNVYNKVHITLSTHECAGLSERDINLASFIEQVAVSMT.

Residue A2 is modified to N-acetylalanine. Substrate is bound by residues 61 to 63 (DHH) and 78 to 81 (STHE).

Belongs to the pterin-4-alpha-carbinolamine dehydratase family. In terms of assembly, homotetramer and homodimer. Heterotetramer with HNF1A; formed by a dimer of dimers. Interacts with HNF1B (via HNF-p1 domain); the interaction increases HNF1B transactivation activity.

It localises to the cytoplasm. Its subcellular location is the nucleus. It carries out the reaction (4aS,6R)-4a-hydroxy-L-erythro-5,6,7,8-tetrahydrobiopterin = (6R)-L-erythro-6,7-dihydrobiopterin + H2O. Functionally, involved in tetrahydrobiopterin biosynthesis. Seems to both prevent the formation of 7-pterins and accelerate the formation of quinonoid-BH2. Coactivator for HNF1A-dependent transcription. Regulates the dimerization of homeodomain protein HNF1A and enhances its transcriptional activity. Also acts as a coactivator for HNF1B-dependent transcription. The protein is Pterin-4-alpha-carbinolamine dehydratase (Pcbd1) of Rattus norvegicus (Rat).